The following is a 106-amino-acid chain: UPF0091 protein RP266 (106 aa).

Belongs to the UPF0091 family.

In Rickettsia prowazekii (strain Madrid E), this protein is UPF0091 protein RP266.